Here is a 192-residue protein sequence, read N- to C-terminus: Putative 3-methyladenine DNA glycosylase (192 aa).

This sequence belongs to the DNA glycosylase MPG family.

This chain is Putative 3-methyladenine DNA glycosylase, found in Methanoculleus marisnigri (strain ATCC 35101 / DSM 1498 / JR1).